Consider the following 105-residue polypeptide: NADH-quinone oxidoreductase subunit K (105 aa).

Transmembrane regions (helical) follow at residues 9-29 (PNYYLVLAAVLFTIGAAGVLV), 34-54 (IVLFMCVELMLNAANLTLVTF), and 65-85 (IMAFFVMVVAAAEVVVGLAII).

It belongs to the complex I subunit 4L family. NDH-1 is composed of 14 different subunits. Subunits NuoA, H, J, K, L, M, N constitute the membrane sector of the complex.

Its subcellular location is the cell membrane. It carries out the reaction a quinone + NADH + 5 H(+)(in) = a quinol + NAD(+) + 4 H(+)(out). In terms of biological role, NDH-1 shuttles electrons from NADH, via FMN and iron-sulfur (Fe-S) centers, to quinones in the respiratory chain. The immediate electron acceptor for the enzyme in this species is believed to be a menaquinone. Couples the redox reaction to proton translocation (for every two electrons transferred, four hydrogen ions are translocated across the cytoplasmic membrane), and thus conserves the redox energy in a proton gradient. The polypeptide is NADH-quinone oxidoreductase subunit K (Salinispora tropica (strain ATCC BAA-916 / DSM 44818 / JCM 13857 / NBRC 105044 / CNB-440)).